Consider the following 310-residue polypeptide: Protein BIG GRAIN 1 (310 aa).

The disordered stretch occupies residues 77 to 140 (SYRARAPGPH…EKKAKKPGAS (64 aa)). Residues 90-106 (SSSSECSSYGGFSSSEA) show a composition bias toward low complexity.

It belongs to the BIG GRAIN 1 (BG1) plant protein family. In terms of tissue distribution, mostly expressed in the vascular tissues of leaves, culms and young panicles, especially in hulls.

The protein resides in the cell membrane. Its function is as follows. Involved in auxin transport. Positive regulator of the auxin signaling pathway involved in gravitropism, plant growth and grain development. This Oryza sativa subsp. japonica (Rice) protein is Protein BIG GRAIN 1.